Consider the following 188-residue polypeptide: Inactive cysteine S-methyltransferase OspZ (188 aa).

Belongs to the NleE/OspZ family.

The protein resides in the secreted. It is found in the host cytoplasm. Its subcellular location is the host nucleus. Its function is as follows. Inactive effector protein: in contrast to other members of the family, does not have the ability to inhibit host cell NF-kappa-B activation. Probably lacks cysteine S-methyltransferase activity due to its inability to bind S-adenosyl-L-methionine at the C-terminus. The sequence is that of Inactive cysteine S-methyltransferase OspZ from Shigella flexneri.